We begin with the raw amino-acid sequence, 207 residues long: Thiamine-phosphate synthase (207 aa).

Residues 38-42 and asparagine 70 contribute to the 4-amino-2-methyl-5-(diphosphooxymethyl)pyrimidine site; that span reads QYRAK. Mg(2+)-binding residues include aspartate 71 and aspartate 90. Threonine 109 is a 4-amino-2-methyl-5-(diphosphooxymethyl)pyrimidine binding site. 135–137 serves as a coordination point for 2-[(2R,5Z)-2-carboxy-4-methylthiazol-5(2H)-ylidene]ethyl phosphate; the sequence is TNS. Lysine 138 is a 4-amino-2-methyl-5-(diphosphooxymethyl)pyrimidine binding site. 2-[(2R,5Z)-2-carboxy-4-methylthiazol-5(2H)-ylidene]ethyl phosphate contacts are provided by residues glycine 165 and 185–186; that span reads IS.

It belongs to the thiamine-phosphate synthase family. It depends on Mg(2+) as a cofactor.

The catalysed reaction is 2-[(2R,5Z)-2-carboxy-4-methylthiazol-5(2H)-ylidene]ethyl phosphate + 4-amino-2-methyl-5-(diphosphooxymethyl)pyrimidine + 2 H(+) = thiamine phosphate + CO2 + diphosphate. It carries out the reaction 2-(2-carboxy-4-methylthiazol-5-yl)ethyl phosphate + 4-amino-2-methyl-5-(diphosphooxymethyl)pyrimidine + 2 H(+) = thiamine phosphate + CO2 + diphosphate. It catalyses the reaction 4-methyl-5-(2-phosphooxyethyl)-thiazole + 4-amino-2-methyl-5-(diphosphooxymethyl)pyrimidine + H(+) = thiamine phosphate + diphosphate. Its pathway is cofactor biosynthesis; thiamine diphosphate biosynthesis; thiamine phosphate from 4-amino-2-methyl-5-diphosphomethylpyrimidine and 4-methyl-5-(2-phosphoethyl)-thiazole: step 1/1. Its function is as follows. Condenses 4-methyl-5-(beta-hydroxyethyl)thiazole monophosphate (THZ-P) and 2-methyl-4-amino-5-hydroxymethyl pyrimidine pyrophosphate (HMP-PP) to form thiamine monophosphate (TMP). This is Thiamine-phosphate synthase from Clostridium perfringens (strain SM101 / Type A).